Consider the following 816-residue polypeptide: uncharacterized protein (816 aa).

Disordered regions lie at residues Met1 to Ser34, Arg65 to Asn101, Asp154 to Glu406, and Arg770 to Ala816. Positions Asn18 to Gln32 are enriched in low complexity. The span at Val83–Gln92 shows a compositional bias: polar residues. Residues Thr161–Thr223 show a composition bias toward low complexity. Positions Glu246 to Ile260 are enriched in polar residues. Residue Ser286 is modified to Phosphoserine. Basic and acidic residues predominate over residues Asp292–Glu316. The segment covering Ala317–Glu326 has biased composition (acidic residues). A compositionally biased stretch (low complexity) spans Gln327 to Thr342. Phosphoserine occurs at positions 343 and 347. Residues Ser343–Pro353 are compositionally biased toward acidic residues. Residues Lys380 to Ser396 are compositionally biased toward low complexity. Composition is skewed to basic and acidic residues over residues Arg770 to Gln792 and Pro799 to Ala816. Residue Thr809 is modified to Phosphothreonine.

Pyrophosphorylated by 5-diphosphoinositol pentakisphosphate (5-IP7). Serine pyrophosphorylation is achieved by Mg(2+)-dependent, but enzyme independent transfer of a beta-phosphate from a inositol pyrophosphate to a pre-phosphorylated serine residue.

This is an uncharacterized protein from Saccharomyces cerevisiae (strain ATCC 204508 / S288c) (Baker's yeast).